Here is an 86-residue protein sequence, read N- to C-terminus: Alpha-toxin TbTx5 (86 aa).

An N-terminal signal peptide occupies residues 1–19; it reads MNDFVFLVVACLLTAGTEG. An LCN-type CS-alpha/beta domain is found at 21–82; the sequence is KDGYPVEGDN…EPTKTNGRCK (62 aa). Cystine bridges form between Cys-31–Cys-81, Cys-35–Cys-57, Cys-43–Cys-64, and Cys-47–Cys-66. Pro-83 carries the post-translational modification Proline amide.

The protein belongs to the long (4 C-C) scorpion toxin superfamily. Sodium channel inhibitor family. Alpha subfamily. As to expression, expressed by the venom gland.

It is found in the secreted. Alpha toxins bind voltage-independently at site-3 of sodium channels (Nav) and inhibit the inactivation of the activated channels, thereby blocking neuronal transmission. In Tityus bahiensis (Brazilian scorpion), this protein is Alpha-toxin TbTx5.